A 284-amino-acid polypeptide reads, in one-letter code: Orotidine 5'-phosphate decarboxylase (284 aa).

Substrate-binding positions include aspartate 42, 64–66 (KTH), 96–105 (DRKFADIGNT), tyrosine 237, and arginine 255. The Proton donor role is filled by lysine 98.

This sequence belongs to the OMP decarboxylase family.

It carries out the reaction orotidine 5'-phosphate + H(+) = UMP + CO2. Its pathway is pyrimidine metabolism; UMP biosynthesis via de novo pathway; UMP from orotate: step 2/2. This is Orotidine 5'-phosphate decarboxylase (URA3) from Magnusiomyces magnusii (Yeast).